Here is a 230-residue protein sequence, read N- to C-terminus: Probable septum site-determining protein MinC (230 aa).

Belongs to the MinC family. Interacts with MinD and FtsZ.

Its function is as follows. Cell division inhibitor that blocks the formation of polar Z ring septums. Rapidly oscillates between the poles of the cell to destabilize FtsZ filaments that have formed before they mature into polar Z rings. Prevents FtsZ polymerization. This Rhodopseudomonas palustris (strain BisA53) protein is Probable septum site-determining protein MinC.